A 151-amino-acid polypeptide reads, in one-letter code: Glutamate mutase sigma subunit 1 (151 aa).

Residues 7–140 (PRTVILGVIG…EMLREDLQLT (134 aa)) form the B12-binding domain. Residues 17–21 (SDAHV), His-20, 65–67 (SSL), and 96–100 (NLAVG) each bind adenosylcob(III)alamin.

It belongs to the methylaspartate mutase GlmS subunit family. As to quaternary structure, heterotetramer composed of 2 epsilon subunits (GlmE) and 2 sigma subunits (GlmS). GlmE exists as a homodimer and GlmS as a monomer. Adenosylcob(III)alamin is required as a cofactor.

It catalyses the reaction (2S,3S)-3-methyl-L-aspartate = L-glutamate. Its pathway is amino-acid degradation; L-glutamate degradation via mesaconate pathway; acetate and pyruvate from L-glutamate: step 1/4. Catalyzes the carbon skeleton rearrangement of L-glutamate to L-threo-3-methylaspartate ((2S,3S)-3-methylaspartate). The polypeptide is Glutamate mutase sigma subunit 1 (Haloarcula marismortui (strain ATCC 43049 / DSM 3752 / JCM 8966 / VKM B-1809) (Halobacterium marismortui)).